Consider the following 554-residue polypeptide: Kinesin-like protein 3 (554 aa).

The region spanning 3 to 325 is the Kinesin motor domain; the sequence is SIKVVCRIRP…LRFGHRAKSI (323 aa). ATP is bound by residues 84–91 and 233–240; these read GQTGSGKT and GSESVGKS. Residues 446-473 are a coiled coil; it reads LSSTKQQLSDLMTALGDAQERYVELVKN.

Belongs to the TRAFAC class myosin-kinesin ATPase superfamily. Kinesin family.

The protein resides in the cytoplasm. It localises to the cytoskeleton. Its function is as follows. Cytoplasmic motor that could play a role in Golgi membrane recycling. This chain is Kinesin-like protein 3 (klp3), found in Schizosaccharomyces pombe (strain 972 / ATCC 24843) (Fission yeast).